Here is a 509-residue protein sequence, read N- to C-terminus: Phosphoenolpyruvate carboxylase (509 aa).

It belongs to the PEPCase type 2 family. Homotetramer. The cofactor is Mg(2+).

It carries out the reaction oxaloacetate + phosphate = phosphoenolpyruvate + hydrogencarbonate. Its function is as follows. Catalyzes the irreversible beta-carboxylation of phosphoenolpyruvate (PEP) to form oxaloacetate (OAA), a four-carbon dicarboxylic acid source for the tricarboxylic acid cycle. This is Phosphoenolpyruvate carboxylase from Metallosphaera sedula (strain ATCC 51363 / DSM 5348 / JCM 9185 / NBRC 15509 / TH2).